A 265-amino-acid chain; its full sequence is Probable aquaporin TIP3-2 (265 aa).

2 consecutive transmembrane segments (helical) span residues 32–52 (LSEF…VYGL) and 62–82 (LGGL…AVAV). The short motif at 92–94 (NPA) is the NPA 1 element. A run of 3 helical transmembrane segments spans residues 110-130 (AALY…LLRL), 151-171 (ALLL…ATAV), and 179-199 (DIAP…GGPF). An NPA 2 motif is present at residues 205 to 207 (NPA). A helical transmembrane segment spans residues 223 to 243 (WVYWLGPLIGAGMAGALYEFV).

The protein belongs to the MIP/aquaporin (TC 1.A.8) family. TIP (TC 1.A.8.10) subfamily. Expressed in leaves and at lower levels in roots.

The protein localises to the vacuole membrane. Aquaporins facilitate the transport of water and small neutral solutes across cell membranes. May be involved in transport from the vacuolar compartment to the cytoplasm. This is Probable aquaporin TIP3-2 (TIP3-2) from Oryza sativa subsp. japonica (Rice).